The following is a 716-amino-acid chain: Phenylalanine/tyrosine ammonia-lyase (716 aa).

The Proton donor/acceptor role is filled by Tyr110. The 5-imidazolinone (Ala-Gly) cross-link spans 211–213 (ASG). At Ser212 the chain carries 2,3-didehydroalanine (Ser). Residues Asn270, Gln360, Arg366, Asn397, Lys468, Glu496, and Asn499 each coordinate (E)-cinnamate.

It belongs to the PAL/histidase family. As to quaternary structure, homotetramer. Dimer of dimers. Contains an active site 4-methylidene-imidazol-5-one (MIO), which is formed autocatalytically by cyclization and dehydration of residues Ala-Ser-Gly.

It is found in the cytoplasm. The enzyme catalyses L-phenylalanine = (E)-cinnamate + NH4(+). It catalyses the reaction L-tyrosine = (E)-4-coumarate + NH4(+). Its pathway is phenylpropanoid metabolism; trans-cinnamate biosynthesis; trans-cinnamate from L-phenylalanine: step 1/1. Its function is as follows. Catalyzes the non-oxidative deamination of L-phenylalanine and L-tyrosine to form trans-cinnamic acid and p-coumaric acid respectively with similar efficiencies. Facilitates the commitment step in phenylpropanoid pathways that produce secondary metabolites such as lignins, coumarins and flavonoids. This Rhodotorula toruloides (Yeast) protein is Phenylalanine/tyrosine ammonia-lyase (PAL).